Here is a 171-residue protein sequence, read N- to C-terminus: Nicotinamide-nucleotide adenylyltransferase (171 aa).

Belongs to the archaeal NMN adenylyltransferase family.

It is found in the cytoplasm. The enzyme catalyses beta-nicotinamide D-ribonucleotide + ATP + H(+) = diphosphate + NAD(+). It participates in cofactor biosynthesis; NAD(+) biosynthesis; NAD(+) from nicotinamide D-ribonucleotide: step 1/1. In Methanococcus maripaludis (strain C5 / ATCC BAA-1333), this protein is Nicotinamide-nucleotide adenylyltransferase.